The primary structure comprises 398 residues: Endoglucanase (398 aa).

Residues 1-23 (MSPLKCMALAALGAVMFVGSAQA) form the signal peptide. The active-site Proton donor is Glu-58. The Nucleophile role is filled by Asp-119.

This sequence belongs to the glycosyl hydrolase 8 (cellulase D) family.

Its subcellular location is the secreted. The enzyme catalyses Endohydrolysis of (1-&gt;4)-beta-D-glucosidic linkages in cellulose, lichenin and cereal beta-D-glucans.. It functions in the pathway glycan metabolism; bacterial cellulose biosynthesis. Functionally, hydrolyzes carboxymethylcellulose. This is Endoglucanase (bcsZ) from Pseudomonas fluorescens (strain SBW25).